The primary structure comprises 381 residues: 1-deoxy-D-xylulose 5-phosphate reductoisomerase (381 aa).

Positions 10, 11, 12, 13, 38, and 121 each coordinate NADPH. Lysine 122 lines the 1-deoxy-D-xylulose 5-phosphate pocket. Position 123 (glutamate 123) interacts with NADPH. Aspartate 147 lines the Mn(2+) pocket. Positions 148, 149, 173, and 196 each coordinate 1-deoxy-D-xylulose 5-phosphate. Glutamate 149 is a binding site for Mn(2+). Glycine 202 is an NADPH binding site. 1-deoxy-D-xylulose 5-phosphate contacts are provided by serine 209, asparagine 214, lysine 215, and glutamate 218. Glutamate 218 is a Mn(2+) binding site.

This sequence belongs to the DXR family. Mg(2+) is required as a cofactor. Mn(2+) serves as cofactor.

It catalyses the reaction 2-C-methyl-D-erythritol 4-phosphate + NADP(+) = 1-deoxy-D-xylulose 5-phosphate + NADPH + H(+). Its pathway is isoprenoid biosynthesis; isopentenyl diphosphate biosynthesis via DXP pathway; isopentenyl diphosphate from 1-deoxy-D-xylulose 5-phosphate: step 1/6. Functionally, catalyzes the NADPH-dependent rearrangement and reduction of 1-deoxy-D-xylulose-5-phosphate (DXP) to 2-C-methyl-D-erythritol 4-phosphate (MEP). In Alkaliphilus oremlandii (strain OhILAs) (Clostridium oremlandii (strain OhILAs)), this protein is 1-deoxy-D-xylulose 5-phosphate reductoisomerase.